A 189-amino-acid polypeptide reads, in one-letter code: UPF0398 protein LCK_00599 (189 aa).

It belongs to the UPF0398 family.

The sequence is that of UPF0398 protein LCK_00599 from Leuconostoc citreum (strain KM20).